Reading from the N-terminus, the 240-residue chain is Epoxyqueuosine reductase QueH (240 aa).

4 residues coordinate [4Fe-4S] cluster: C43, C44, C129, and C132. An intrachain disulfide couples C211 to C213.

This sequence belongs to the QueH family.

The catalysed reaction is epoxyqueuosine(34) in tRNA + AH2 = queuosine(34) in tRNA + A + H2O. The protein operates within tRNA modification; tRNA-queuosine biosynthesis. Its function is as follows. Catalyzes the conversion of epoxyqueuosine (oQ) to queuosine (Q), which is a hypermodified base found in the wobble positions of tRNA(Asp), tRNA(Asn), tRNA(His) and tRNA(Tyr). This is Epoxyqueuosine reductase QueH from Staphylococcus aureus (strain Mu50 / ATCC 700699).